The primary structure comprises 130 residues: Small ribosomal subunit protein bS6 (130 aa).

The segment at 99 to 130 is disordered; sequence ASPMVKAKDERRERHDFASEANDDSEAGDSEE. The segment covering 104–116 has biased composition (basic and acidic residues); the sequence is KAKDERRERHDFA. Residues 119 to 130 are compositionally biased toward acidic residues; the sequence is ANDDSEAGDSEE.

The protein belongs to the bacterial ribosomal protein bS6 family.

Functionally, binds together with bS18 to 16S ribosomal RNA. This is Small ribosomal subunit protein bS6 from Yersinia enterocolitica serotype O:8 / biotype 1B (strain NCTC 13174 / 8081).